A 322-amino-acid chain; its full sequence is Sideroflexin-1 (322 aa).

An N-acetylserine modification is found at Ser2. Over 2–102 the chain is Mitochondrial matrix; that stretch reads SGEVPPNINI…MSAQVPMNMT (101 aa). Residues 103 to 120 traverse the membrane as a helical segment; it reads ITGCMMTFYRTTPAVLFW. The Mitochondrial intermembrane portion of the chain corresponds to 121–146; the sequence is QWINQSFNAVVNYTNRSGDAPLTVNE. A helical transmembrane segment spans residues 147–167; that stretch reads LGTAYVSATTGAVATALGLNA. The Mitochondrial matrix segment spans residues 168 to 174; sequence LTKHVSP. A helical transmembrane segment spans residues 175–195; sequence LIGRFVPFAAVAAANCINIPL. Topologically, residues 196-228 are mitochondrial intermembrane; the sequence is MRQRELKVGIPVTDENGTRLGESTNAAKQAITQ. Residues 229–249 form a helical membrane-spanning segment; that stretch reads VVISRILMAAPGMAIPPFIMN. Topologically, residues 250 to 266 are mitochondrial matrix; that stretch reads TLEKKAFLKRFPWMSAP. Residues 267–287 traverse the membrane as a helical segment; sequence IQVTLVGFCLVFATPLCCALF. Residues 288 to 322 are Mitochondrial intermembrane-facing; that stretch reads PQKSSMSVTSLEDDLQASIQKSHPELRRVYFNKGL.

This sequence belongs to the sideroflexin family.

The protein resides in the mitochondrion inner membrane. It carries out the reaction L-serine(in) = L-serine(out). The enzyme catalyses L-alanine(in) = L-alanine(out). It catalyses the reaction L-cysteine(in) = L-cysteine(out). Amino acid transporter importing serine, an essential substrate of the mitochondrial branch of the one-carbon pathway, into mitochondria. Mitochondrial serine is then converted to glycine and formate, which exits to the cytosol where it is used to generate the charged folates that serve as one-carbon donors. May also transport other amino acids including alanine and cysteine. The protein is Sideroflexin-1 (Sfxn1) of Rattus norvegicus (Rat).